The primary structure comprises 263 residues: uncharacterized protein (263 aa).

It belongs to the A.longa ORF167/ORF288 family.

Its subcellular location is the plastid. This is an uncharacterized protein from Euglena longa (Euglenophycean alga).